A 103-amino-acid polypeptide reads, in one-letter code: Hexon-interlacing protein (103 aa).

The interval R25–S45 is disordered. Residues L72–R99 are a coiled coil.

The protein belongs to the adenoviridae hexon-interlacing protein family. Homotrimer. Interacts with hexon protein; this interaction tethers the hexons together. Self-interacts with adjacent proteins. Interacts with kinesin light chain KLC1; this interaction leads to capsid disruption at the nuclear pore complex during virus entry into host cell.

The protein localises to the virion. It localises to the host nucleus. In terms of biological role, structural component of the virion that acts as a cement protein on the capsid exterior and forms triskelion structures consisting of three molecules that stabilize three hexon trimers at the center of each icosahedral facet and fixes the peripentonal hexons. Dispensable for assembly. During virus entry, recruits the anterograde motor kinesin-1 to the capsid docked at the nuclear pore complex thereby subjecting the docked capsid to a pulling force. The resulting tension leads to capsid disruption, dispersion of capsid fragments toward cell periphery and eventually viral DNA entry into the host nucleus. This chain is Hexon-interlacing protein, found in Canine adenovirus serotype 1 (strain CLL) (CAdV-1).